The sequence spans 299 residues: ATP phosphoribosyltransferase (299 aa).

It belongs to the ATP phosphoribosyltransferase family. Long subfamily. Equilibrium between an active dimeric form, an inactive hexameric form and higher aggregates. Interconversion between the various forms is largely reversible and is influenced by the natural substrates and inhibitors of the enzyme. Mg(2+) is required as a cofactor.

Its subcellular location is the cytoplasm. It catalyses the reaction 1-(5-phospho-beta-D-ribosyl)-ATP + diphosphate = 5-phospho-alpha-D-ribose 1-diphosphate + ATP. It participates in amino-acid biosynthesis; L-histidine biosynthesis; L-histidine from 5-phospho-alpha-D-ribose 1-diphosphate: step 1/9. Feedback inhibited by histidine. Functionally, catalyzes the condensation of ATP and 5-phosphoribose 1-diphosphate to form N'-(5'-phosphoribosyl)-ATP (PR-ATP). Has a crucial role in the pathway because the rate of histidine biosynthesis seems to be controlled primarily by regulation of HisG enzymatic activity. This is ATP phosphoribosyltransferase from Pectobacterium atrosepticum (strain SCRI 1043 / ATCC BAA-672) (Erwinia carotovora subsp. atroseptica).